Reading from the N-terminus, the 390-residue chain is Zinc transporter 7 (390 aa).

Residues methionine 1 to asparagine 37 are Cytoplasmic-facing. Residues leucine 38 to tryptophan 58 form a helical membrane-spanning segment. The Lumenal portion of the chain corresponds to serine 59 to aspartate 67. The helical transmembrane segment at serine 68–serine 88 threads the bilayer. Residues arginine 89–arginine 102 lie on the Cytoplasmic side of the membrane. Residues alanine 103 to phenylalanine 123 form a helical membrane-spanning segment. Over serine 124–arginine 140 the chain is Lumenal. A helical membrane pass occupies residues leucine 141 to histidine 161. The segment at histidine 161 to histidine 226 is his-rich loop. At glycine 162–glycine 250 the chain is on the cytoplasmic side. The tract at residues histidine 167–serine 243 is disordered. Positions histidine 177–histidine 186 are enriched in low complexity. A compositionally biased stretch (basic residues) spans glycine 187–histidine 208. 2 stretches are compositionally biased toward basic and acidic residues: residues serine 209–histidine 222 and cysteine 232–glycine 242. The chain crosses the membrane as a helical span at residues valine 251 to leucine 271. Over methionine 272–glycine 276 the chain is Lumenal. Residues leucine 277–isoleucine 297 form a helical membrane-spanning segment. The Cytoplasmic portion of the chain corresponds to proline 298 to methionine 390.

The protein belongs to the cation diffusion facilitator (CDF) transporter (TC 2.A.4) family. SLC30A subfamily. As to quaternary structure, homooligomer.

The protein localises to the golgi apparatus membrane. It localises to the cytoplasmic vesicle. The protein resides in the golgi apparatus. Its subcellular location is the trans-Golgi network. It is found in the sarcoplasmic reticulum. The protein localises to the mitochondrion. The enzyme catalyses Zn(2+)(in) = Zn(2+)(out). Functionally, zinc ion transporter mediating zinc entry from the cytosol into the lumen of organelles along the secretory pathway. By contributing to zinc ion homeostasis within the early secretory pathway, regulates the activation and folding of enzymes like alkaline phosphatases. This chain is Zinc transporter 7 (slc30a7), found in Xenopus tropicalis (Western clawed frog).